Here is a 341-residue protein sequence, read N- to C-terminus: UDP-3-O-acylglucosamine N-acyltransferase (341 aa).

Catalysis depends on H239, which acts as the Proton acceptor.

It belongs to the transferase hexapeptide repeat family. LpxD subfamily. As to quaternary structure, homotrimer.

The catalysed reaction is a UDP-3-O-[(3R)-3-hydroxyacyl]-alpha-D-glucosamine + a (3R)-hydroxyacyl-[ACP] = a UDP-2-N,3-O-bis[(3R)-3-hydroxyacyl]-alpha-D-glucosamine + holo-[ACP] + H(+). It functions in the pathway bacterial outer membrane biogenesis; LPS lipid A biosynthesis. Catalyzes the N-acylation of UDP-3-O-acylglucosamine using 3-hydroxyacyl-ACP as the acyl donor. Is involved in the biosynthesis of lipid A, a phosphorylated glycolipid that anchors the lipopolysaccharide to the outer membrane of the cell. The sequence is that of UDP-3-O-acylglucosamine N-acyltransferase from Shewanella sp. (strain MR-7).